The chain runs to 323 residues: 4-hydroxy-3-methylbut-2-enyl diphosphate reductase (323 aa).

Residue C13 participates in [4Fe-4S] cluster binding. Positions 42 and 75 each coordinate (2E)-4-hydroxy-3-methylbut-2-enyl diphosphate. Residues H42 and H75 each contribute to the dimethylallyl diphosphate site. Positions 42 and 75 each coordinate isopentenyl diphosphate. Position 97 (C97) interacts with [4Fe-4S] cluster. Residue H125 participates in (2E)-4-hydroxy-3-methylbut-2-enyl diphosphate binding. Residue H125 coordinates dimethylallyl diphosphate. H125 contacts isopentenyl diphosphate. Residue E127 is the Proton donor of the active site. T168 is a (2E)-4-hydroxy-3-methylbut-2-enyl diphosphate binding site. C198 lines the [4Fe-4S] cluster pocket. (2E)-4-hydroxy-3-methylbut-2-enyl diphosphate contacts are provided by S226, S227, N228, and S270. Residues S226, S227, N228, and S270 each coordinate dimethylallyl diphosphate. The isopentenyl diphosphate site is built by S226, S227, N228, and S270.

Belongs to the IspH family. It depends on [4Fe-4S] cluster as a cofactor.

It catalyses the reaction isopentenyl diphosphate + 2 oxidized [2Fe-2S]-[ferredoxin] + H2O = (2E)-4-hydroxy-3-methylbut-2-enyl diphosphate + 2 reduced [2Fe-2S]-[ferredoxin] + 2 H(+). The enzyme catalyses dimethylallyl diphosphate + 2 oxidized [2Fe-2S]-[ferredoxin] + H2O = (2E)-4-hydroxy-3-methylbut-2-enyl diphosphate + 2 reduced [2Fe-2S]-[ferredoxin] + 2 H(+). Its pathway is isoprenoid biosynthesis; dimethylallyl diphosphate biosynthesis; dimethylallyl diphosphate from (2E)-4-hydroxy-3-methylbutenyl diphosphate: step 1/1. It participates in isoprenoid biosynthesis; isopentenyl diphosphate biosynthesis via DXP pathway; isopentenyl diphosphate from 1-deoxy-D-xylulose 5-phosphate: step 6/6. In terms of biological role, catalyzes the conversion of 1-hydroxy-2-methyl-2-(E)-butenyl 4-diphosphate (HMBPP) into a mixture of isopentenyl diphosphate (IPP) and dimethylallyl diphosphate (DMAPP). Acts in the terminal step of the DOXP/MEP pathway for isoprenoid precursor biosynthesis. The chain is 4-hydroxy-3-methylbut-2-enyl diphosphate reductase from Nitrosomonas europaea (strain ATCC 19718 / CIP 103999 / KCTC 2705 / NBRC 14298).